The sequence spans 108 residues: Nascent polypeptide-associated complex protein (108 aa).

The NAC-A/B domain maps to 1–68 (MNPREIRRMM…LREVKKEVEQ (68 aa)).

This sequence belongs to the NAC-alpha family. In terms of assembly, homodimer. Interacts with the ribosome. Binds ribosomal RNA.

Contacts the emerging nascent chain on the ribosome. The sequence is that of Nascent polypeptide-associated complex protein from Picrophilus torridus (strain ATCC 700027 / DSM 9790 / JCM 10055 / NBRC 100828 / KAW 2/3).